The sequence spans 430 residues: Lipoyl synthase, mitochondrial (430 aa).

The transit peptide at 1–37 (MATSAGKLRTLYSAHSSLSSLPPSARPTLQLATLRSY) directs the protein to the mitochondrion. Positions 39–55 (TTTPHDSPIGNTSNTPP) are enriched in polar residues. Residues 39-58 (TTTPHDSPIGNTSNTPPTVK) form a disordered region. [4Fe-4S] cluster contacts are provided by cysteine 141, cysteine 146, cysteine 152, cysteine 172, cysteine 176, cysteine 179, and serine 387. Positions 155–376 (GSSKSAATAT…KERALEMGFL (222 aa)) constitute a Radical SAM core domain.

It belongs to the radical SAM superfamily. Lipoyl synthase family. Requires [4Fe-4S] cluster as cofactor.

The protein resides in the mitochondrion. The catalysed reaction is [[Fe-S] cluster scaffold protein carrying a second [4Fe-4S](2+) cluster] + N(6)-octanoyl-L-lysyl-[protein] + 2 oxidized [2Fe-2S]-[ferredoxin] + 2 S-adenosyl-L-methionine + 4 H(+) = [[Fe-S] cluster scaffold protein] + N(6)-[(R)-dihydrolipoyl]-L-lysyl-[protein] + 4 Fe(3+) + 2 hydrogen sulfide + 2 5'-deoxyadenosine + 2 L-methionine + 2 reduced [2Fe-2S]-[ferredoxin]. Its pathway is protein modification; protein lipoylation via endogenous pathway; protein N(6)-(lipoyl)lysine from octanoyl-[acyl-carrier-protein]: step 2/2. Catalyzes the radical-mediated insertion of two sulfur atoms into the C-6 and C-8 positions of the octanoyl moiety bound to the lipoyl domains of lipoate-dependent enzymes, thereby converting the octanoylated domains into lipoylated derivatives. The sequence is that of Lipoyl synthase, mitochondrial from Ajellomyces capsulatus (strain G186AR / H82 / ATCC MYA-2454 / RMSCC 2432) (Darling's disease fungus).